We begin with the raw amino-acid sequence, 185 residues long: Ribosome-recycling factor (185 aa).

This sequence belongs to the RRF family.

Its subcellular location is the cytoplasm. Its function is as follows. Responsible for the release of ribosomes from messenger RNA at the termination of protein biosynthesis. May increase the efficiency of translation by recycling ribosomes from one round of translation to another. The protein is Ribosome-recycling factor of Streptococcus suis (strain 98HAH33).